The following is a 198-amino-acid chain: Glycerol-3-phosphate acyltransferase (198 aa).

Helical transmembrane passes span 5 to 25 (YLII…SIAI), 55 to 75 (VGLA…YLGF), 79 to 99 (GSLG…LPVL), 114 to 134 (VLLF…LIVV), 139 to 159 (YVSL…LIYI), and 164 to 184 (YIGL…RSNI).

This sequence belongs to the PlsY family. Probably interacts with PlsX.

The protein localises to the cell membrane. It catalyses the reaction an acyl phosphate + sn-glycerol 3-phosphate = a 1-acyl-sn-glycero-3-phosphate + phosphate. Its pathway is lipid metabolism; phospholipid metabolism. Functionally, catalyzes the transfer of an acyl group from acyl-phosphate (acyl-PO(4)) to glycerol-3-phosphate (G3P) to form lysophosphatidic acid (LPA). This enzyme utilizes acyl-phosphate as fatty acyl donor, but not acyl-CoA or acyl-ACP. The sequence is that of Glycerol-3-phosphate acyltransferase from Finegoldia magna (strain ATCC 29328 / DSM 20472 / WAL 2508) (Peptostreptococcus magnus).